A 343-amino-acid polypeptide reads, in one-letter code: Aspartate carbamoyltransferase catalytic subunit (343 aa).

Carbamoyl phosphate contacts are provided by R54 and T55. K82 is an L-aspartate binding site. Carbamoyl phosphate-binding residues include R104, H134, and Q137. L-aspartate contacts are provided by R177 and R232. Carbamoyl phosphate contacts are provided by G277 and P278. The segment at 323-343 (PDQSNPQRNVTNTSNWQETKR) is disordered.

Belongs to the aspartate/ornithine carbamoyltransferase superfamily. ATCase family. In terms of assembly, heterododecamer (2C3:3R2) of six catalytic PyrB chains organized as two trimers (C3), and six regulatory PyrI chains organized as three dimers (R2).

It carries out the reaction carbamoyl phosphate + L-aspartate = N-carbamoyl-L-aspartate + phosphate + H(+). It functions in the pathway pyrimidine metabolism; UMP biosynthesis via de novo pathway; (S)-dihydroorotate from bicarbonate: step 2/3. Catalyzes the condensation of carbamoyl phosphate and aspartate to form carbamoyl aspartate and inorganic phosphate, the committed step in the de novo pyrimidine nucleotide biosynthesis pathway. The chain is Aspartate carbamoyltransferase catalytic subunit from Renibacterium salmoninarum (strain ATCC 33209 / DSM 20767 / JCM 11484 / NBRC 15589 / NCIMB 2235).